A 344-amino-acid polypeptide reads, in one-letter code: Ubiquitin-associated domain-containing protein 2 (344 aa).

The signal sequence occupies residues 1 to 34; sequence MFTSTGSNGLYKAPLSKSLLLVPSAISILLTLLF. The Extracellular segment spans residues 35–91; sequence QHYQKFFAYNLQAIKEDFQIWRLVCGRVICLDLKDTFCSSLLIYNFRIFERRYGSRK. The chain crosses the membrane as a helical span at residues 92 to 111; that stretch reads FSSFLLGAWTLSALFDLLLV. Residues 112–123 lie on the Cytoplasmic side of the membrane; the sequence is EAAQYVFGITIN. Residues 124-142 form a helical membrane-spanning segment; it reads SLPSGFLGPVFALFVPFYC. At 143-162 the chain is on the extracellular side; sequence SIPRVQVTQVLGYFSITNKT. N160 carries an N-linked (GlcNAc...) asparagine glycan. Residues 163–183 traverse the membrane as a helical segment; it reads LVYILGLQLLTSGSYIWILAL. Topologically, residues 184 to 344 are cytoplasmic; sequence SGLISGICYN…NVATNFLLQH (161 aa). Positions 284–307 are disordered; it reads RHNENYQDHHPSDQDTPPPTEVSE. The span at 286 to 296 shows a compositional bias: basic and acidic residues; the sequence is NENYQDHHPSD. Residues 304–344 enclose the UBA domain; the sequence is EVSEEQVARLMEMGFSRGDALEALRASNNDLNVATNFLLQH.

The protein localises to the endoplasmic reticulum membrane. In terms of biological role, restricts trafficking of FAF2 from the endoplasmic reticulum to lipid droplets. May negatively regulate the canonical Wnt signaling pathway in the lymphocytes. The polypeptide is Ubiquitin-associated domain-containing protein 2 (UBAC2) (Gallus gallus (Chicken)).